The primary structure comprises 136 residues: Large ribosomal subunit protein bL21 (136 aa).

The span at 1–21 (MSETPSKAKASKPAESKAQAS) shows a compositional bias: low complexity. The tract at residues 1–25 (MSETPSKAKASKPAESKAQASDSSG) is disordered.

Belongs to the bacterial ribosomal protein bL21 family. In terms of assembly, part of the 50S ribosomal subunit. Contacts protein L20.

Its function is as follows. This protein binds to 23S rRNA in the presence of protein L20. This Synechococcus sp. (strain RCC307) protein is Large ribosomal subunit protein bL21.